The following is a 432-amino-acid chain: Teosinte glume architecture 1 (432 aa).

Disordered regions lie at residues 20-55 and 68-102; these read HAAA…GAPA and ECEP…QQQC. Over residues 22–41 the composition is skewed to low complexity; that stretch reads AAAPSSGGHAANAAAAGTGT. An SBP-type zinc finger spans residues 102 to 179; that stretch reads CPSCAVDGCR…DGHNRRRRKP (78 aa). Zn(2+) is bound by residues cysteine 105, cysteine 110, cysteine 127, histidine 130, cysteine 146, cysteine 149, histidine 153, and cysteine 165. Residues 409–420 are compositionally biased toward gly residues; the sequence is GGGSGGGEGSSD. The disordered stretch occupies residues 409-432; sequence GGGSGGGEGSSDGGTSSSMPFSWQ.

In terms of assembly, monomer and homodimer. In terms of tissue distribution, strongly expressed in immature ears and weakly in husks. Found in the inflorescence meristem of the developing ear, in the spikelet pair primordia, the glume primordia, the cupule forming region and other floral organs. Not detected in other tissues.

SBP transcriptional regulator probably involved in the domestication of maize. Acts as a transcriptional repressor binding to a 5'-GTAC-3' motif. May repress the growth of lateral branches in length and numbers. This Zea mays (Maize) protein is Teosinte glume architecture 1.